The chain runs to 55 residues: Potassium channel toxin alpha-KTx 17.1 (55 aa).

Residues 1–23 (MKFIIVLILISVLIATIVPVNEA) form the signal peptide. Gln-24 carries the pyrrolidone carboxylic acid modification. Disulfide bonds link Cys-27–Cys-43, Cys-33–Cys-48, and Cys-37–Cys-50. Thr-53 carries the post-translational modification Threonine amide.

Belongs to the short scorpion toxin superfamily. Potassium channel inhibitor family. Alpha-KTx 17 subfamily. Expressed by the venom gland.

It localises to the secreted. In terms of biological role, blocker of potassium channels, which inhibits both the delayed rectifier and fast transient potassium current. The inhibition is reversible and voltage-independent. It causes a depolarizing shift of the steady-state activation curve of the currents, without changing their steady-state inactivation behavior. This Olivierus martensii (Manchurian scorpion) protein is Potassium channel toxin alpha-KTx 17.1.